The chain runs to 375 residues: MRFAPYLISAVVITTIILGGAWWTSAMDTKLQTKMKEIIDQHTSTWTPVVSSVTSTQTDTLRVTISEVVSVTATLTETFTATPTVTSVVHALATTDPHPDNSKIVILMGSNFQNDANSPLHPFAQSIIKNRREYAERHGYKFEFLDADAYASRVTGHLMPWVKVPMLQDTMKKYPDAEWIWWLDHDALVMNKDLNVVDHVLKHDRLNTILTREAEYKSGAGIPADGFRTPKDQDAKDVHFIISQDFNGINAGSLFIRNSEVGRWIVDLWFEPLYLDHIQGYAEQQAFSHMVFYHPQVYKHVGVVPLKAINAYDFDDNIWGYDDGDLCIHFAGCNYFKNCPEKFLKYAQILSSKQGSDWMSAQEKDHIQNLLKPSS.

The Cytoplasmic portion of the chain corresponds to 1 to 2; that stretch reads MR. A helical; Signal-anchor for type II membrane protein transmembrane segment spans residues 3–23; that stretch reads FAPYLISAVVITTIILGGAWW. Over 24 to 375 the chain is Lumenal; that stretch reads TSAMDTKLQT…HIQNLLKPSS (352 aa).

Belongs to the glycosyltransferase 34 family. O-glycosylated.

The protein localises to the golgi apparatus membrane. Functionally, involved in the O- and N-linked oligosaccharide modification of proteins transported through the Golgi stack. This occurs in cis Golgi where the enzyme transfers galactose from UDP-galactose to a variety of mannose based acceptors. The polypeptide is Alpha-1,2-galactosyltransferase (gma12) (Schizosaccharomyces pombe (strain 972 / ATCC 24843) (Fission yeast)).